The following is a 147-amino-acid chain: Protein-export protein SecB (147 aa).

The protein belongs to the SecB family. As to quaternary structure, homotetramer, a dimer of dimers. One homotetramer interacts with 1 SecA dimer.

The protein localises to the cytoplasm. Functionally, one of the proteins required for the normal export of preproteins out of the cell cytoplasm. It is a molecular chaperone that binds to a subset of precursor proteins, maintaining them in a translocation-competent state. It also specifically binds to its receptor SecA. The sequence is that of Protein-export protein SecB from Neisseria gonorrhoeae (strain ATCC 700825 / FA 1090).